Consider the following 382-residue polypeptide: Lysophosphatidylserine lipase ABHD12 (382 aa).

Positions 1–12 are enriched in basic and acidic residues; the sequence is MRKRKGSADHDS. Residues 1–45 form a disordered region; sequence MRKRKGSADHDSSFTATLTDGSSDLKQCHKGTDADTDPGGSGKEM. At 1 to 60 the chain is on the cytoplasmic side; the sequence is MRKRKGSADHDSSFTATLTDGSSDLKQCHKGTDADTDPGGSGKEMGRRCRRGGLMWRLRR. Polar residues predominate over residues 13-25; it reads SFTATLTDGSSDL. A helical membrane pass occupies residues 61–81; the sequence is ILIWLLGIYIAIPVIIKVCPS. Residues 82-382 are Extracellular-facing; sequence IQAKLVFLNF…DFLRAPHPHG (301 aa). Residue Asn-109 is glycosylated (N-linked (GlcNAc...) asparagine). The active-site Nucleophile is Ser-232. Active-site charge relay system residues include Asp-319 and His-358.

Belongs to the serine esterase family. As to expression, ubiquitously expressed in adult tissues.

The protein localises to the endoplasmic reticulum membrane. The enzyme catalyses 1-(9Z-octadecenoyl)-sn-glycero-3-phospho-L-serine + H2O = sn-glycero-3-phospho-L-serine + (9Z)-octadecenoate + H(+). It carries out the reaction 1-(9Z-octadecenoyl)-sn-glycero-3-phospho-(1'-sn-glycerol) + H2O = sn-glycero-3-phospho-(1'-sn-glycerol) + (9Z)-octadecenoate + H(+). The catalysed reaction is 1-(9Z-octadecenoyl)-sn-glycero-3-phospho-(1D-myo-inositol) + H2O = sn-glycero-3-phospho-1D-myo-inositol + (9Z)-octadecenoate + H(+). It catalyses the reaction 1-(9Z-octadecenoyl)-sn-glycero-3-phosphoethanolamine + H2O = sn-glycero-3-phosphoethanolamine + (9Z)-octadecenoate + H(+). The enzyme catalyses 1-(9Z-octadecenoyl)-sn-glycero-3-phosphocholine + H2O = 1-(9Z-octadecenoyl)-sn-glycerol + phosphocholine + H(+). It carries out the reaction 2-(9Z-octadecenoyl)-glycerol + H2O = glycerol + (9Z)-octadecenoate + H(+). The catalysed reaction is 1-hexadecanoyl-sn-glycero-3-phospho-L-serine + H2O = sn-glycero-3-phospho-L-serine + hexadecanoate + H(+). It catalyses the reaction 2-(5Z,8Z,11Z,14Z-eicosatetraenoyl)-glycerol + H2O = glycerol + (5Z,8Z,11Z,14Z)-eicosatetraenoate + H(+). The enzyme catalyses Hydrolyzes glycerol monoesters of long-chain fatty acids.. It carries out the reaction 1-decanoylglycerol + H2O = decanoate + glycerol + H(+). The catalysed reaction is 1-dodecanoylglycerol + H2O = dodecanoate + glycerol + H(+). It catalyses the reaction 1-tetradecanoylglycerol + H2O = tetradecanoate + glycerol + H(+). The enzyme catalyses 2-hexadecanoylglycerol + H2O = glycerol + hexadecanoate + H(+). It carries out the reaction 1-(9Z-octadecenoyl)-glycerol + H2O = glycerol + (9Z)-octadecenoate + H(+). The catalysed reaction is 2-(9Z,12Z-octadecadienoyl)-glycerol + H2O = (9Z,12Z)-octadecadienoate + glycerol + H(+). It catalyses the reaction 1-(5Z,8Z,11Z,14Z-eicosatetraenoyl)-glycerol + H2O = glycerol + (5Z,8Z,11Z,14Z)-eicosatetraenoate + H(+). The enzyme catalyses 1-(9Z,12Z-octadecadienoyl)-glycerol + H2O = (9Z,12Z)-octadecadienoate + glycerol + H(+). It carries out the reaction 1-hexadecanoylglycerol + H2O = glycerol + hexadecanoate + H(+). The catalysed reaction is 1-octadecanoylglycerol + H2O = octadecanoate + glycerol + H(+). It catalyses the reaction 1-octadecanoyl-2-(9,10-epoxyoctadecanoyl)-sn-glycero-3-phospho-L-serine + H2O = 9,10-epoxyoctadecanoate + 1-octadecanoyl-sn-glycero-3-phosphoserine + H(+). The enzyme catalyses 1-octadecanoyl-2-(10-hydroxyoctadecanoyl)-sn-glycero-3-phospho-L-serine + H2O = 1-octadecanoyl-sn-glycero-3-phosphoserine + 10-hydroxyoctadecanoate + H(+). It carries out the reaction 1-hexadecanoyl-2-(10-hydroxyoctadecanoyl)-sn-glycero-3-phospho-L-serine + H2O = 10-hydroxyoctadecanoate + 1-hexadecanoyl-sn-glycero-3-phospho-L-serine + H(+). Lysophosphatidylserine (LPS) lipase that mediates the hydrolysis of lysophosphatidylserine, a class of signaling lipids that regulates immunological and neurological processes. Represents a major lysophosphatidylserine lipase in the brain, thereby playing a key role in the central nervous system. Also able to hydrolyze oxidized phosphatidylserine; oxidized phosphatidylserine is produced in response to severe inflammatory stress and constitutes a proapoptotic 'eat me' signal. Also has monoacylglycerol (MAG) lipase activity: hydrolyzes 2-arachidonoylglycerol (2-AG), thereby acting as a regulator of endocannabinoid signaling pathways. Has a strong preference for very-long-chain lipid substrates; substrate specificity is likely due to improved catalysis and not improved substrate binding. This is Lysophosphatidylserine lipase ABHD12 from Danio rerio (Zebrafish).